Consider the following 1159-residue polypeptide: Cation channel sperm-associated auxiliary subunit gamma (1159 aa).

The first 35 residues, 1–35 (MCGPAMFPAGPRWPRVRVLQVLWALLAVLLASRRL), serve as a signal peptide directing secretion. The Extracellular portion of the chain corresponds to 36 to 1065 (WAIKDFEECT…IHGLPLSPKR (1030 aa)). 2 disulfide bridges follow: C44–C105 and C159–C165. N102 carries N-linked (GlcNAc...) asparagine glycosylation. N177 carries an N-linked (GlcNAc...) asparagine glycan. The cysteines at positions 288 and 343 are disulfide-linked. An N-linked (GlcNAc...) asparagine glycan is attached at N355. An intrachain disulfide couples C394 to C402. Residues N426 and N574 are each glycosylated (N-linked (GlcNAc...) asparagine). Disulfide bonds link C638/C860, C806/C834, C882/C1046, C909/C918, and C1010/C1016. A helical transmembrane segment spans residues 1066-1087 (ALFILMVSLSVFVGLVIFYIAF). Topologically, residues 1088–1159 (CLLWPLVVKG…KEAVERQLMT (72 aa)) are cytoplasmic. Residues 1138 to 1159 (FSSRMTEDKAEPKEAVERQLMT) form a disordered region. The span at 1142-1159 (MTEDKAEPKEAVERQLMT) shows a compositional bias: basic and acidic residues.

This sequence belongs to the CATSPERG family. Component of the CatSper complex or CatSpermasome composed of the core pore-forming members CATSPER1, CATSPER2, CATSPER3 and CATSPER4 as well as auxiliary members CATSPERB, CATSPERG, CATSPERD, CATSPERE, CATSPERZ, SCLO6C1, TMEM249, TMEM262 and EFCAB9. HSPA1 may be an additional auxiliary complex member. The core complex members CATSPER1, CATSPER2, CATSPER3 and CATSPER4 form a heterotetrameric channel. The auxiliary CATSPERB, CATSPERG, CATSPERD and CATSPERE subunits form a pavilion-like structure over the pore which stabilizes the complex through interactions with CATSPER4, CATSPER3, CATSPER1 and CATSPER2 respectively. TMEM262/CATSPERH interacts with CATSPERB, further stabilizing the complex. C2CD6/CATSPERT interacts at least with CATSPERD and is required for targeting the CatSper complex in the flagellar membrane.

It is found in the cell projection. The protein resides in the cilium. It localises to the flagellum membrane. Functionally, auxiliary component of the CatSper complex, a complex involved in sperm cell hyperactivation. Sperm cell hyperactivation is needed for sperm motility which is essential late in the preparation of sperm for fertilization. This chain is Cation channel sperm-associated auxiliary subunit gamma, found in Macaca fascicularis (Crab-eating macaque).